Here is a 307-residue protein sequence, read N- to C-terminus: Probable protein S-acyltransferase 14 (307 aa).

2 consecutive transmembrane segments (helical) span residues 22–42 (LGSI…YAVV) and 63–83 (ILIL…SVVF). The 51-residue stretch at 127-177 (RFCRKCNQLKPSRCHHCSVCGRCVLKMDHHCVWVVNCVGALNYKYFLLFLF) folds into the DHHC domain. The active-site S-palmitoyl cysteine intermediate is the Cys157. The next 2 helical transmembrane spans lie at 171-191 (YFLL…LVLM) and 213-233 (TFLA…FLIM).

Belongs to the DHHC palmitoyltransferase family.

Its subcellular location is the golgi apparatus. It localises to the trans-Golgi network membrane. It catalyses the reaction L-cysteinyl-[protein] + hexadecanoyl-CoA = S-hexadecanoyl-L-cysteinyl-[protein] + CoA. Functionally, palmitoyl acyltransferase. The protein is Probable protein S-acyltransferase 14 (PAT14) of Arabidopsis thaliana (Mouse-ear cress).